We begin with the raw amino-acid sequence, 423 residues long: Imidazolonepropionase (423 aa).

Residues histidine 78 and histidine 80 each contribute to the Fe(3+) site. Zn(2+) is bound by residues histidine 78 and histidine 80. Residues arginine 87, tyrosine 150, and histidine 183 each coordinate 4-imidazolone-5-propanoate. Residue tyrosine 150 coordinates N-formimidoyl-L-glutamate. Histidine 247 is a Fe(3+) binding site. Position 247 (histidine 247) interacts with Zn(2+). Glutamate 250 serves as a coordination point for 4-imidazolone-5-propanoate. Aspartate 322 lines the Fe(3+) pocket. Residue aspartate 322 coordinates Zn(2+). Positions 324 and 326 each coordinate N-formimidoyl-L-glutamate. 4-imidazolone-5-propanoate is bound at residue serine 327.

The protein belongs to the metallo-dependent hydrolases superfamily. HutI family. The cofactor is Zn(2+). It depends on Fe(3+) as a cofactor.

Its subcellular location is the cytoplasm. The catalysed reaction is 4-imidazolone-5-propanoate + H2O = N-formimidoyl-L-glutamate. The protein operates within amino-acid degradation; L-histidine degradation into L-glutamate; N-formimidoyl-L-glutamate from L-histidine: step 3/3. Its function is as follows. Catalyzes the hydrolytic cleavage of the carbon-nitrogen bond in imidazolone-5-propanoate to yield N-formimidoyl-L-glutamate. It is the third step in the universal histidine degradation pathway. The polypeptide is Imidazolonepropionase (Bacillus cereus (strain ATCC 10987 / NRS 248)).